Reading from the N-terminus, the 296-residue chain is Bifunctional protein FolD (296 aa).

NADP(+) contacts are provided by residues 166–168 (GRS), serine 195, and threonine 236.

Belongs to the tetrahydrofolate dehydrogenase/cyclohydrolase family. Homodimer.

The catalysed reaction is (6R)-5,10-methylene-5,6,7,8-tetrahydrofolate + NADP(+) = (6R)-5,10-methenyltetrahydrofolate + NADPH. The enzyme catalyses (6R)-5,10-methenyltetrahydrofolate + H2O = (6R)-10-formyltetrahydrofolate + H(+). It participates in one-carbon metabolism; tetrahydrofolate interconversion. Functionally, catalyzes the oxidation of 5,10-methylenetetrahydrofolate to 5,10-methenyltetrahydrofolate and then the hydrolysis of 5,10-methenyltetrahydrofolate to 10-formyltetrahydrofolate. This chain is Bifunctional protein FolD, found in Dehalococcoides mccartyi (strain ATCC BAA-2266 / KCTC 15142 / 195) (Dehalococcoides ethenogenes (strain 195)).